The following is a 726-amino-acid chain: Penicillin-binding protein 1A (726 aa).

The Cytoplasmic segment spans residues 1 to 3 (MKK). Residues 4 to 24 (LVIGILGIVIALFVGLLVFLI) traverse the membrane as a helical; Signal-anchor for type II membrane protein segment. Residues 25–726 (PIYKNLPDPK…SDLNAILGLR (702 aa)) lie on the Periplasmic side of the membrane. The transglycosylase stretch occupies residues 45-213 (SEVYDAKGRL…AKYNPFYHPE (169 aa)). Residue Glu-83 is the Proton donor; for transglycosylase activity of the active site. The transpeptidase stretch occupies residues 379–662 (KYLGGNRAEI…SRVALPIWID (284 aa)). Catalysis depends on Ser-432, which acts as the Acyl-ester intermediate; for transpeptidase activity.

In the N-terminal section; belongs to the glycosyltransferase 51 family. The protein in the C-terminal section; belongs to the transpeptidase family.

The protein resides in the cell inner membrane. It catalyses the reaction [GlcNAc-(1-&gt;4)-Mur2Ac(oyl-L-Ala-gamma-D-Glu-L-Lys-D-Ala-D-Ala)](n)-di-trans,octa-cis-undecaprenyl diphosphate + beta-D-GlcNAc-(1-&gt;4)-Mur2Ac(oyl-L-Ala-gamma-D-Glu-L-Lys-D-Ala-D-Ala)-di-trans,octa-cis-undecaprenyl diphosphate = [GlcNAc-(1-&gt;4)-Mur2Ac(oyl-L-Ala-gamma-D-Glu-L-Lys-D-Ala-D-Ala)](n+1)-di-trans,octa-cis-undecaprenyl diphosphate + di-trans,octa-cis-undecaprenyl diphosphate + H(+). The enzyme catalyses Preferential cleavage: (Ac)2-L-Lys-D-Ala-|-D-Ala. Also transpeptidation of peptidyl-alanyl moieties that are N-acyl substituents of D-alanine.. It participates in cell wall biogenesis; peptidoglycan biosynthesis. This Aquifex aeolicus (strain VF5) protein is Penicillin-binding protein 1A (mrcA).